The following is a 267-amino-acid chain: Phosphate import ATP-binding protein PstB 2 (267 aa).

The region spanning 21 to 262 (LTTKDLHVYY…AKCQSTSDYV (242 aa)) is the ABC transporter domain. Residue 53-60 (GPSGCGKS) coordinates ATP.

It belongs to the ABC transporter superfamily. Phosphate importer (TC 3.A.1.7) family. The complex is composed of two ATP-binding proteins (PstB), two transmembrane proteins (PstC and PstA) and a solute-binding protein (PstS).

The protein resides in the cell membrane. The enzyme catalyses phosphate(out) + ATP + H2O = ADP + 2 phosphate(in) + H(+). Functionally, part of the ABC transporter complex PstSACB involved in phosphate import. Responsible for energy coupling to the transport system. This Streptococcus agalactiae serotype Ia (strain ATCC 27591 / A909 / CDC SS700) protein is Phosphate import ATP-binding protein PstB 2.